Reading from the N-terminus, the 177-residue chain is Dual-action ribosomal maturation protein DarP (177 aa).

The segment covering 1 to 12 (MKIVGDSEHFKQ) has biased composition (basic and acidic residues). Positions 1-26 (MKIVGDSEHFKQPYDSNDEYVSKTED) are disordered.

The protein belongs to the DarP family.

Its subcellular location is the cytoplasm. Functionally, member of a network of 50S ribosomal subunit biogenesis factors which assembles along the 30S-50S interface, preventing incorrect 23S rRNA structures from forming. Promotes peptidyl transferase center (PTC) maturation. This Shewanella oneidensis (strain ATCC 700550 / JCM 31522 / CIP 106686 / LMG 19005 / NCIMB 14063 / MR-1) protein is Dual-action ribosomal maturation protein DarP.